The chain runs to 75 residues: uncharacterized protein (75 aa).

The Glutaredoxin domain maps to 1–75; sequence MIKIYSTPTC…KAEIDKLIEK (75 aa). Cysteines 10 and 13 form a disulfide.

This sequence belongs to the glutaredoxin family.

This is an uncharacterized protein from Clostridium pasteurianum.